The following is a 118-amino-acid chain: Protein MT2260 (118 aa).

This sequence belongs to the HesB/IscA family.

The polypeptide is Protein MT2260 (Mycobacterium tuberculosis (strain CDC 1551 / Oshkosh)).